Here is a 476-residue protein sequence, read N- to C-terminus: uncharacterized protein (476 aa).

The protein belongs to the herpesviridae US22 family.

This is an uncharacterized protein from Homo sapiens (Human).